Reading from the N-terminus, the 195-residue chain is MHSDDPQQLELLRVCRIGRAQGLKGEVTVQIFTDEPEYRFAPGAVLYTKDGEEEYVVESSRTFKNRWIIKFEGIDDRDASEAANGVVLYGEADDPEEMLEADEWYPKDLISLEARLAEGNTLGLAPGTVVGKVVDVIEVAQWLLKIRLANPVKDADGVVVENSALVPFVDELVPDIDLEGGYLTLDPPGGLIPGL.

The PRC barrel domain occupies 101-191 (ADEWYPKDLI…YLTLDPPGGL (91 aa)).

Belongs to the RimM family. In terms of assembly, binds ribosomal protein uS19.

The protein localises to the cytoplasm. An accessory protein needed during the final step in the assembly of 30S ribosomal subunit, possibly for assembly of the head region. Essential for efficient processing of 16S rRNA. May be needed both before and after RbfA during the maturation of 16S rRNA. It has affinity for free ribosomal 30S subunits but not for 70S ribosomes. The chain is Ribosome maturation factor RimM from Bifidobacterium adolescentis (strain ATCC 15703 / DSM 20083 / NCTC 11814 / E194a).